The primary structure comprises 775 residues: Acylamino-acid-releasing enzyme 1 (775 aa).

Catalysis depends on charge relay system residues Ser-627, Asp-718, and His-750.

The protein belongs to the peptidase S9C family. In terms of assembly, homotetramer.

It localises to the cytoplasm. The enzyme catalyses Cleavage of an N-acetyl or N-formyl amino acid from the N-terminus of a polypeptide.. Its function is as follows. Catalyzes the hydrolysis of the N-terminal peptide bond of an N-acetylated peptide to generate an N-acetylated amino acid and a peptide with a free N-terminus. The chain is Acylamino-acid-releasing enzyme 1 from Oryza sativa subsp. japonica (Rice).